The following is a 91-amino-acid chain: Large ribosomal subunit protein eL43 (91 aa).

The C4-type zinc-finger motif lies at 39-60 (CPFCGKDAMRRGAVGIWNCSKC).

It belongs to the eukaryotic ribosomal protein eL43 family.

This chain is Large ribosomal subunit protein eL43 (rpl-37a), found in Ostertagia ostertagi (Brown stomach worm).